The sequence spans 428 residues: Flotillin-2 (428 aa).

S-palmitoyl cysteine attachment occurs at residues Cys-4, Cys-19, and Cys-20.

It belongs to the band 7/mec-2 family. Flotillin subfamily. In terms of assembly, heterooligomeric complex of flotillins 1 and 2. Palmitoylation may be required for the formation of higher order complexes and for neurite outgrowth in cultured neural stem cells. As to expression, normally expressed in growing retinal exons of newly differentiated ganglion cells at the retinal margin. After optic nerve injury, expressed in all retinal ganglion cells and retinal axons. Also expressed in endothelial cells, spinal cord, larval and adult skin, muscle processes, thymus and gill macrophages.

Its subcellular location is the membrane. The protein localises to the endosome. May play a role in axon growth and regeneration. May be involved in epidermal cell adhesion and epidermal structure and function. The sequence is that of Flotillin-2 (flot2) from Carassius auratus (Goldfish).